A 210-amino-acid chain; its full sequence is 2-Cys peroxiredoxin BAS1, chloroplastic (210 aa).

The N-terminal 10 residues, 1–10, are a transit peptide targeting the chloroplast; the sequence is DARARSFVAR. Positions 18 to 177 constitute a Thioredoxin domain; the sequence is PLVGNKAPDF…TLRTLQALQY (160 aa). C64 functions as the Cysteine sulfenic acid (-SOH) intermediate in the catalytic mechanism.

This sequence belongs to the peroxiredoxin family. AhpC/Prx1 subfamily. Homodimer; disulfide-linked, upon oxidation. In terms of tissue distribution, expressed in leaf blade, sheath, basiplast, stem and green spike. Maximal expression in young developing shoots segments where cell division and elongation take place. Not expressed in roots.

The protein resides in the plastid. It localises to the chloroplast. The catalysed reaction is a hydroperoxide + [thioredoxin]-dithiol = an alcohol + [thioredoxin]-disulfide + H2O. Functionally, thiol-specific peroxidase that catalyzes the reduction of hydrogen peroxide and organic hydroperoxides to water and alcohols, respectively. Plays a role in cell protection against oxidative stress by detoxifying peroxides. May be an antioxidant enzyme particularly in the developing shoot and photosynthesizing leaf. The polypeptide is 2-Cys peroxiredoxin BAS1, chloroplastic (BAS1) (Hordeum vulgare (Barley)).